A 99-amino-acid polypeptide reads, in one-letter code: Acylphosphatase (99 aa).

Residues 14 to 99 form the Acylphosphatase-like domain; the sequence is AVDVTVTGRV…DQGLRSFGVR (86 aa). Residues Arg-29 and Asn-47 contribute to the active site.

Belongs to the acylphosphatase family.

The catalysed reaction is an acyl phosphate + H2O = a carboxylate + phosphate + H(+). The polypeptide is Acylphosphatase (acyP) (Nocardioides sp. (strain ATCC BAA-499 / JS614)).